The primary structure comprises 153 residues: Aspartate carbamoyltransferase regulatory chain (153 aa).

Residues cysteine 109, cysteine 114, cysteine 138, and cysteine 141 each contribute to the Zn(2+) site.

This sequence belongs to the PyrI family. Contains catalytic and regulatory chains. It depends on Zn(2+) as a cofactor.

Functionally, involved in allosteric regulation of aspartate carbamoyltransferase. The chain is Aspartate carbamoyltransferase regulatory chain from Cronobacter sakazakii (strain ATCC BAA-894) (Enterobacter sakazakii).